The following is a 123-amino-acid chain: Modulator protein MzrA (123 aa).

Residues 1-8 lie on the Cytoplasmic side of the membrane; it reads MIKRPRWQ. Residues 9 to 29 form a helical membrane-spanning segment; it reads YVLLIALALLALATLLVPCMV. Topologically, residues 30–123 are periplasmic; sequence RTESELRIRA…EFARAPLNLG (94 aa).

This sequence belongs to the MzrA family. As to quaternary structure, interacts with EnvZ.

It localises to the cell inner membrane. Its function is as follows. Modulates the activity of the EnvZ/OmpR two-component regulatory system, probably by directly modulating EnvZ enzymatic activity and increasing stability of phosphorylated OmpR. This chain is Modulator protein MzrA, found in Serratia proteamaculans (strain 568).